We begin with the raw amino-acid sequence, 195 residues long: MDLEKGKKPSEQAAACRIMQVKDKLITLQPVVRACVFLATAVAAVIMGLNKQSYTTVVAIVGTRPVTQTFTAKFKDTPAFVFFVIANAIASGYNLMVLVTRRILQRRAQSLSVHLLDMVILTLLATGSATAASMAQLGKNGNLHARWNPICDKFGSFCNHGGIALVSSFIGVALMLALNLLSAAANSPRSNVTGQ.

The Cytoplasmic portion of the chain corresponds to 1–25 (MDLEKGKKPSEQAAACRIMQVKDKL). A helical transmembrane segment spans residues 26–46 (ITLQPVVRACVFLATAVAAVI). Residues 47–78 (MGLNKQSYTTVVAIVGTRPVTQTFTAKFKDTP) lie on the Extracellular side of the membrane. A helical membrane pass occupies residues 79–99 (AFVFFVIANAIASGYNLMVLV). Topologically, residues 100 to 114 (TRRILQRRAQSLSVH) are cytoplasmic. A helical membrane pass occupies residues 115–135 (LLDMVILTLLATGSATAASMA). Residues 136-160 (QLGKNGNLHARWNPICDKFGSFCNH) are Extracellular-facing. The chain crosses the membrane as a helical span at residues 161 to 181 (GGIALVSSFIGVALMLALNLL). The Cytoplasmic segment spans residues 182–195 (SAAANSPRSNVTGQ).

The protein belongs to the Casparian strip membrane proteins (CASP) family. In terms of assembly, homodimer and heterodimers.

It is found in the cell membrane. This chain is CASP-like protein 1B2, found in Oryza sativa subsp. indica (Rice).